The sequence spans 315 residues: Protoheme IX farnesyltransferase 1 (315 aa).

A run of 8 helical transmembrane segments spans residues 30–50, 56–76, 106–126, 132–152, 162–182, 186–206, 249–269, and 289–309; these read PGIIISNSLAALGGFWIAWIQ, GGPGIFAAMAVAMIGTALVMA, IPPPVMILYGTCLGACGFIML, LTAVLGLLAFLLYAVVYTLWF, VGSFPGAAPPLIGYCALTGYI, AILLYAIMFLWQPPHFWAIGI, LYIDVSPFYTASALLLGAIWL, and FFYSIVYFSLLFLILMADSFI.

It belongs to the UbiA prenyltransferase family. Protoheme IX farnesyltransferase subfamily. As to quaternary structure, interacts with CtaA.

It localises to the cell membrane. The enzyme catalyses heme b + (2E,6E)-farnesyl diphosphate + H2O = Fe(II)-heme o + diphosphate. It functions in the pathway porphyrin-containing compound metabolism; heme O biosynthesis; heme O from protoheme: step 1/1. In terms of biological role, converts heme B (protoheme IX) to heme O by substitution of the vinyl group on carbon 2 of heme B porphyrin ring with a hydroxyethyl farnesyl side group. The sequence is that of Protoheme IX farnesyltransferase 1 from Bacillus velezensis (strain DSM 23117 / BGSC 10A6 / LMG 26770 / FZB42) (Bacillus amyloliquefaciens subsp. plantarum).